The chain runs to 680 residues: tRNA 5-methylaminomethyl-2-thiouridine biosynthesis bifunctional protein MnmC (680 aa).

Residues 1-245 (MSHPPIQTAT…KREMLTGILP (245 aa)) form a tRNA (mnm(5)s(2)U34)-methyltransferase region. Residues 270–680 (IGGGIVSALT…PVQQRVSVLS (411 aa)) are FAD-dependent cmnm(5)s(2)U34 oxidoreductase.

The protein in the N-terminal section; belongs to the methyltransferase superfamily. tRNA (mnm(5)s(2)U34)-methyltransferase family. It in the C-terminal section; belongs to the DAO family. It depends on FAD as a cofactor.

It is found in the cytoplasm. The catalysed reaction is 5-aminomethyl-2-thiouridine(34) in tRNA + S-adenosyl-L-methionine = 5-methylaminomethyl-2-thiouridine(34) in tRNA + S-adenosyl-L-homocysteine + H(+). Functionally, catalyzes the last two steps in the biosynthesis of 5-methylaminomethyl-2-thiouridine (mnm(5)s(2)U) at the wobble position (U34) in tRNA. Catalyzes the FAD-dependent demodification of cmnm(5)s(2)U34 to nm(5)s(2)U34, followed by the transfer of a methyl group from S-adenosyl-L-methionine to nm(5)s(2)U34, to form mnm(5)s(2)U34. This chain is tRNA 5-methylaminomethyl-2-thiouridine biosynthesis bifunctional protein MnmC, found in Yersinia enterocolitica serotype O:8 / biotype 1B (strain NCTC 13174 / 8081).